Reading from the N-terminus, the 384-residue chain is Probable endopolygalacturonase C (384 aa).

The first 19 residues, 1 to 19 (MVRQLILISSLLAAVAVRA), serve as a signal peptide directing secretion. Residues 20–40 (APADPAHPMVTEAPDVNLVEK) constitute a propeptide that is removed on maturation. Cys-45 and Cys-63 form a disulfide bridge. 2 PbH1 repeats span residues 176–207 (STDL…DIGE) and 208–229 (STYI…AINS). Catalysis depends on Asp-222, which acts as the Proton donor. A disulfide bond links Cys-224 and Cys-240. Residue His-244 is part of the active site. 2 PbH1 repeats span residues 254–280 (RDDN…RIKT) and 288–310 (VSEV…VIEQ). Residue Asn-261 is glycosylated (N-linked (GlcNAc...) asparagine). 2 disulfide bridges follow: Cys-349–Cys-354 and Cys-373–Cys-382.

This sequence belongs to the glycosyl hydrolase 28 family.

The protein resides in the secreted. It catalyses the reaction (1,4-alpha-D-galacturonosyl)n+m + H2O = (1,4-alpha-D-galacturonosyl)n + (1,4-alpha-D-galacturonosyl)m.. In terms of biological role, involved in maceration and soft-rotting of plant tissue. Hydrolyzes the 1,4-alpha glycosidic bonds of de-esterified pectate in the smooth region of the plant cell wall. The protein is Probable endopolygalacturonase C (pgaC) of Aspergillus niger (strain ATCC MYA-4892 / CBS 513.88 / FGSC A1513).